Consider the following 1039-residue polypeptide: Kinesin-like protein KIN-5B (1039 aa).

One can recognise a Kinesin motor domain in the interval 48–390; it reads NVQVILRCKP…LDYAYRAKNI (343 aa). 134–141 is a binding site for ATP; that stretch reads GQTGTGKT. The tract at residues 1008–1039 is disordered; it reads TLSEEHTSLEKISTKQGLGEANNRTPFLEVNK. Basic and acidic residues predominate over residues 1010–1020; the sequence is SEEHTSLEKIS.

The protein belongs to the TRAFAC class myosin-kinesin ATPase superfamily. Kinesin family. KIN-5/BimC subfamily.

The protein resides in the cytoplasm. It is found in the cytoskeleton. Its subcellular location is the spindle. In terms of biological role, responsible for microtubule translocation. May be important for the organization of phragmoplast-specific arrays of microtubules. Plays an essential role in stabilizing the mitotic spindle. Required during mitotic cytokinesis. The chain is Kinesin-like protein KIN-5B from Arabidopsis thaliana (Mouse-ear cress).